Here is a 421-residue protein sequence, read N- to C-terminus: 4-hydroxy-3-methylbut-2-en-1-yl diphosphate synthase (flavodoxin) (421 aa).

[4Fe-4S] cluster is bound by residues C298, C301, C344, and E351.

This sequence belongs to the IspG family. Requires [4Fe-4S] cluster as cofactor.

The enzyme catalyses (2E)-4-hydroxy-3-methylbut-2-enyl diphosphate + oxidized [flavodoxin] + H2O + 2 H(+) = 2-C-methyl-D-erythritol 2,4-cyclic diphosphate + reduced [flavodoxin]. It participates in isoprenoid biosynthesis; isopentenyl diphosphate biosynthesis via DXP pathway; isopentenyl diphosphate from 1-deoxy-D-xylulose 5-phosphate: step 5/6. Converts 2C-methyl-D-erythritol 2,4-cyclodiphosphate (ME-2,4cPP) into 1-hydroxy-2-methyl-2-(E)-butenyl 4-diphosphate. The protein is 4-hydroxy-3-methylbut-2-en-1-yl diphosphate synthase (flavodoxin) of Neisseria meningitidis serogroup C (strain 053442).